Here is a 309-residue protein sequence, read N- to C-terminus: Putative rhizopine-binding protein (309 aa).

A signal peptide spans 1–20 (MKKFIIGIAAAVLVSTAAHA).

It belongs to the bacterial solute-binding protein 2 family.

Its subcellular location is the periplasm. Its function is as follows. Involved in rhizopine (L-3-O-methyl-scyllo-inosamine) catabolism. Could be involved in its high affinity transport. The chain is Putative rhizopine-binding protein (mocB) from Rhizobium meliloti (Ensifer meliloti).